The sequence spans 295 residues: 5'-adenylylsulfate reductase-like 6 (295 aa).

An N-terminal signal peptide occupies residues 1 to 22 (MEKKLTLLLLVVVVLFVNLTNA). The 139-residue stretch at 23-161 (TVRVQICPRE…LVAFYTDVTG (139 aa)) folds into the Thioredoxin domain. Asn136 carries N-linked (GlcNAc...) asparagine glycosylation. A helical transmembrane segment spans residues 208–228 (ATVFVLLRLLHLISPTMVVFV).

The protein resides in the membrane. The sequence is that of 5'-adenylylsulfate reductase-like 6 (APRL6) from Arabidopsis thaliana (Mouse-ear cress).